The following is a 218-amino-acid chain: MSDNDELQQIAHLRREYTKGGLRRRDLPADPLTLFERWLSQACDAKLADPTAMVVATVDEHGQPYQRIVLLKHYDEKGMVFYTNLGSRKAHQIENNPRVSLLFPWHTLERQVMVIGKAERLSTLEVMKYFHSRPRDSQIGAWVSKQSSRISARGILESKFLELKQKFQQGEVPLPSFWGGFRVSLEQIEFWQGGEHRLHDRFLYQRENDAWKIDRLAP.

Substrate contacts are provided by residues R14–Y17 and K72. FMN is bound by residues R67 to K72, Y82 to T83, R88, K89, and Q111. Positions 129, 133, and 137 each coordinate substrate. Residues Q146–S147 and W191 each bind FMN. A substrate-binding site is contributed by R197–H199. FMN is bound at residue R201.

The protein belongs to the pyridoxamine 5'-phosphate oxidase family. In terms of assembly, homodimer. FMN serves as cofactor.

It catalyses the reaction pyridoxamine 5'-phosphate + O2 + H2O = pyridoxal 5'-phosphate + H2O2 + NH4(+). It carries out the reaction pyridoxine 5'-phosphate + O2 = pyridoxal 5'-phosphate + H2O2. The protein operates within cofactor metabolism; pyridoxal 5'-phosphate salvage; pyridoxal 5'-phosphate from pyridoxamine 5'-phosphate: step 1/1. It functions in the pathway cofactor metabolism; pyridoxal 5'-phosphate salvage; pyridoxal 5'-phosphate from pyridoxine 5'-phosphate: step 1/1. Catalyzes the oxidation of either pyridoxine 5'-phosphate (PNP) or pyridoxamine 5'-phosphate (PMP) into pyridoxal 5'-phosphate (PLP). This Escherichia coli (strain SMS-3-5 / SECEC) protein is Pyridoxine/pyridoxamine 5'-phosphate oxidase.